The following is a 438-amino-acid chain: Cysteine--tRNA ligase (438 aa).

C28 is a Zn(2+) binding site. The 'HIGH' region signature appears at 30-40 (PTVYNHLHLGN). Residues C207, H232, and E236 each contribute to the Zn(2+) site. The 'KMSKS' region motif lies at 264 to 268 (KMSKS). K267 contacts ATP.

This sequence belongs to the class-I aminoacyl-tRNA synthetase family. As to quaternary structure, monomer. The cofactor is Zn(2+).

The protein localises to the cytoplasm. The enzyme catalyses tRNA(Cys) + L-cysteine + ATP = L-cysteinyl-tRNA(Cys) + AMP + diphosphate. The polypeptide is Cysteine--tRNA ligase (Aster yellows witches'-broom phytoplasma (strain AYWB)).